A 179-amino-acid chain; its full sequence is Inorganic pyrophosphatase (179 aa).

Lysine 30, arginine 44, and tyrosine 56 together coordinate substrate. Aspartate 66, aspartate 71, and aspartate 103 together coordinate Mg(2+). Substrate is bound at residue tyrosine 143.

It belongs to the PPase family. As to quaternary structure, homohexamer. Mg(2+) serves as cofactor.

The protein resides in the cytoplasm. It catalyses the reaction diphosphate + H2O = 2 phosphate + H(+). Functionally, catalyzes the hydrolysis of inorganic pyrophosphate (PPi) forming two phosphate ions. This is Inorganic pyrophosphatase from Wigglesworthia glossinidia brevipalpis.